We begin with the raw amino-acid sequence, 158 residues long: 2-C-methyl-D-erythritol 2,4-cyclodiphosphate synthase (158 aa).

2 residues coordinate a divalent metal cation: aspartate 8 and histidine 10. 4-CDP-2-C-methyl-D-erythritol 2-phosphate-binding positions include aspartate 8–histidine 10 and histidine 34–serine 35. Histidine 42 contributes to the a divalent metal cation binding site. 4-CDP-2-C-methyl-D-erythritol 2-phosphate is bound by residues aspartate 56–glycine 58, phenylalanine 61–aspartate 65, and arginine 142.

It belongs to the IspF family. As to quaternary structure, homotrimer. Requires a divalent metal cation as cofactor.

The enzyme catalyses 4-CDP-2-C-methyl-D-erythritol 2-phosphate = 2-C-methyl-D-erythritol 2,4-cyclic diphosphate + CMP. Its pathway is isoprenoid biosynthesis; isopentenyl diphosphate biosynthesis via DXP pathway; isopentenyl diphosphate from 1-deoxy-D-xylulose 5-phosphate: step 4/6. In terms of biological role, involved in the biosynthesis of isopentenyl diphosphate (IPP) and dimethylallyl diphosphate (DMAPP), two major building blocks of isoprenoid compounds. Catalyzes the conversion of 4-diphosphocytidyl-2-C-methyl-D-erythritol 2-phosphate (CDP-ME2P) to 2-C-methyl-D-erythritol 2,4-cyclodiphosphate (ME-CPP) with a corresponding release of cytidine 5-monophosphate (CMP). The polypeptide is 2-C-methyl-D-erythritol 2,4-cyclodiphosphate synthase (Brachyspira hyodysenteriae (strain ATCC 49526 / WA1)).